A 651-amino-acid chain; its full sequence is ATP-dependent zinc metalloprotease FtsH (651 aa).

The Extracellular segment spans residues 1–134; sequence MIVFATILFG…FTTDPQTAGP (134 aa). The chain crosses the membrane as a helical span at residues 135–155; that stretch reads WARAIAVMAPFVLILLLFFLM. Over 156-651 the chain is Cytoplasmic; it reads TRTGRSASQS…PAMSVNGHRG (496 aa). 229-236 contacts ATP; it reads GPPGTGKT. His-451 contacts Zn(2+). Residue Glu-452 is part of the active site. Positions 455 and 527 each coordinate Zn(2+).

In the central section; belongs to the AAA ATPase family. It in the C-terminal section; belongs to the peptidase M41 family. In terms of assembly, homohexamer. It depends on Zn(2+) as a cofactor.

Its subcellular location is the cell membrane. Its function is as follows. Acts as a processive, ATP-dependent zinc metallopeptidase for both cytoplasmic and membrane proteins. Plays a role in the quality control of integral membrane proteins. This Rubrobacter xylanophilus (strain DSM 9941 / JCM 11954 / NBRC 16129 / PRD-1) protein is ATP-dependent zinc metalloprotease FtsH.